Reading from the N-terminus, the 247-residue chain is Uridylate kinase (247 aa).

An ATP-binding site is contributed by 14–17 (KLSG). The interval 22 to 27 (GERGVG) is involved in allosteric activation by GTP. Glycine 56 lines the UMP pocket. Residues glycine 57 and arginine 61 each contribute to the ATP site. UMP contacts are provided by residues aspartate 76 and 137–144 (IGSPYFST). Residues asparagine 165, tyrosine 171, and aspartate 174 each contribute to the ATP site.

It belongs to the UMP kinase family. Homohexamer.

Its subcellular location is the cytoplasm. The catalysed reaction is UMP + ATP = UDP + ADP. It functions in the pathway pyrimidine metabolism; CTP biosynthesis via de novo pathway; UDP from UMP (UMPK route): step 1/1. Its activity is regulated as follows. Allosterically activated by GTP. Inhibited by UTP, 5-bromo-UTP and 5-iodo-UTP. Its function is as follows. Catalyzes the reversible phosphorylation of UMP to UDP, with ATP as the most efficient phosphate donor. The chain is Uridylate kinase (pyrH) from Streptococcus pneumoniae serotype 4 (strain ATCC BAA-334 / TIGR4).